The following is a 565-amino-acid chain: Glucose-6-phosphate isomerase (565 aa).

Glutamate 373 functions as the Proton donor in the catalytic mechanism. Residues histidine 404 and lysine 530 contribute to the active site.

The protein belongs to the GPI family.

It is found in the cytoplasm. It catalyses the reaction alpha-D-glucose 6-phosphate = beta-D-fructose 6-phosphate. It participates in carbohydrate biosynthesis; gluconeogenesis. Its pathway is carbohydrate degradation; glycolysis; D-glyceraldehyde 3-phosphate and glycerone phosphate from D-glucose: step 2/4. Functionally, catalyzes the reversible isomerization of glucose-6-phosphate to fructose-6-phosphate. This is Glucose-6-phosphate isomerase from Corynebacterium jeikeium (strain K411).